The chain runs to 206 residues: Dephospho-CoA kinase (206 aa).

The region spanning 4–200 is the DPCK domain; sequence IVALTGGIGS…HRYLKLATAA (197 aa). ATP is bound at residue 12–17; the sequence is GSGKST.

The protein belongs to the CoaE family.

The protein localises to the cytoplasm. It catalyses the reaction 3'-dephospho-CoA + ATP = ADP + CoA + H(+). Its pathway is cofactor biosynthesis; coenzyme A biosynthesis; CoA from (R)-pantothenate: step 5/5. In terms of biological role, catalyzes the phosphorylation of the 3'-hydroxyl group of dephosphocoenzyme A to form coenzyme A. The sequence is that of Dephospho-CoA kinase from Yersinia pestis.